The following is a 203-amino-acid chain: Glycerol-3-phosphate acyltransferase (203 aa).

4 helical membrane-spanning segments follow: residues 4–24 (LALIMTMAAYLLGSISSAVLI), 68–88 (IPVWGGYFLGIDPIILGVIAI), 117–137 (PIGLDLTGLVMLTWLSVAVLF), and 155–175 (TWMFKPQYTLPVAMLCCLIVF).

This sequence belongs to the PlsY family. Probably interacts with PlsX.

It is found in the cell inner membrane. It catalyses the reaction an acyl phosphate + sn-glycerol 3-phosphate = a 1-acyl-sn-glycero-3-phosphate + phosphate. Its pathway is lipid metabolism; phospholipid metabolism. In terms of biological role, catalyzes the transfer of an acyl group from acyl-phosphate (acyl-PO(4)) to glycerol-3-phosphate (G3P) to form lysophosphatidic acid (LPA). This enzyme utilizes acyl-phosphate as fatty acyl donor, but not acyl-CoA or acyl-ACP. The chain is Glycerol-3-phosphate acyltransferase from Vibrio campbellii (strain ATCC BAA-1116).